Reading from the N-terminus, the 586-residue chain is Tetratricopeptide repeat protein 39B (586 aa).

3 TPR repeats span residues S292–W325, C483–V516, and P524–Y557.

The protein belongs to the TTC39 family.

May be involved in lipid metabolism. In Xenopus laevis (African clawed frog), this protein is Tetratricopeptide repeat protein 39B (ttc39b).